The primary structure comprises 921 residues: Sodium/calcium exchanger 2 (921 aa).

The first 20 residues, 1–20 (MAPLALMGVVLLLGVPHCLG), serve as a signal peptide directing secretion. A disordered region spans residues 23–42 (TPTPSLPPPTANDSDASPEG). A helical membrane pass occupies residues 69-89 (VARAVVYFVAMVYMFLGVSII). Asn125 and Asn130 each carry an N-linked (GlcNAc...) asparagine glycan. The next 4 helical transmembrane spans lie at 131-151 (LTLM…IEVC), 165-185 (IVGS…YVIP), 197-217 (VFFV…LILA), and 226-246 (VWEA…AWMA). Positions 248-267 (KRLLFYKYVYKRYRTDPRSG) are putative calmodulin-binding region. The disordered stretch occupies residues 371-391 (HAADAARRPGATDGAPDDEDD). 2 Calx-beta domains span residues 389–482 (EDDG…FVRL) and 512–611 (ATVT…FIEL). Glu407, Asp443, Asp468, Asp469, Ile471, Glu473, Glu476, Asp518, Asp519, Asp520, Glu536, Asp598, Glu599, and Glu600 together coordinate Ca(2+). Phosphoserine is present on Ser622. A Ca(2+)-binding site is contributed by Glu665. The next 6 membrane-spanning stretches (helical) occupy residues 721–741 (CFDY…ACVP), 749–769 (WACF…IGDL), 786–806 (VVFV…VAAL), 823–843 (AVNV…YWAV), 855–875 (LAFS…VLLY), and 893–913 (LATT…SSLE).

The protein belongs to the Ca(2+):cation antiporter (CaCA) (TC 2.A.19) family. SLC8 subfamily. Detected in kidney cortex, in distal convoluted tubules and connecting segments. Detected in brain and spinal cord (at protein level). Detected in brain, especially in hippocampus CA1, CA2 and CA3 fiels, dentate gyrus, cerebellum and brain cortex.

The protein localises to the cell membrane. Its subcellular location is the basolateral cell membrane. The enzyme catalyses Ca(2+)(in) + 3 Na(+)(out) = Ca(2+)(out) + 3 Na(+)(in). With respect to regulation, calcium transport is down-regulated by Na(+) and stimulated by Ca(2+). Its function is as follows. Mediates the electrogenic exchange of Ca(2+) against Na(+) ions across the cell membrane, and thereby contributes to the regulation of cytoplasmic Ca(2+) levels and Ca(2+)-dependent cellular processes. Contributes to cellular Ca(2+) homeostasis in excitable cells. Contributes to the rapid decrease of cytoplasmic Ca(2+) levels back to baseline after neuronal activation, and thereby contributes to modulate synaptic plasticity, learning and memory. Plays a role in regulating urinary Ca(2+) and Na(+) excretion. The polypeptide is Sodium/calcium exchanger 2 (Mus musculus (Mouse)).